The primary structure comprises 307 residues: Acyl transferase (307 aa).

Catalysis depends on charge relay system residues S116, D213, and H243.

The protein belongs to the LuxD family.

Its pathway is lipid metabolism; fatty acid reduction for biolumincescence. In terms of biological role, acyl transferase is part of the fatty acid reductase system required for aldehyde biosynthesis; it produces fatty acids for the luminescent reaction. The sequence is that of Acyl transferase from Photorhabdus luminescens (Xenorhabdus luminescens).